Here is a 324-residue protein sequence, read N- to C-terminus: Glyoxylate/hydroxypyruvate reductase B (324 aa).

Catalysis depends on residues Arg237 and Glu266. His285 (proton donor) is an active-site residue.

This sequence belongs to the D-isomer specific 2-hydroxyacid dehydrogenase family. GhrB subfamily. In terms of assembly, homodimer.

The protein resides in the cytoplasm. It catalyses the reaction glycolate + NADP(+) = glyoxylate + NADPH + H(+). The enzyme catalyses (R)-glycerate + NAD(+) = 3-hydroxypyruvate + NADH + H(+). The catalysed reaction is (R)-glycerate + NADP(+) = 3-hydroxypyruvate + NADPH + H(+). In terms of biological role, catalyzes the NADPH-dependent reduction of glyoxylate and hydroxypyruvate into glycolate and glycerate, respectively. This is Glyoxylate/hydroxypyruvate reductase B from Salmonella paratyphi A (strain ATCC 9150 / SARB42).